The primary structure comprises 496 residues: NAD(P)H-quinone oxidoreductase subunit 2 A, chloroplastic (496 aa).

14 helical membrane passes run 13–33 (SILP…IDLL), 41–61 (TFWS…ILLL), 83–103 (IFRF…VDYI), 110–130 (VTEF…LCGA), 133–153 (LISI…LSGY), 168–188 (LLMG…PYGL), 213–233 (VSIA…LVPF), 245–265 (PTPV…ALAT), 279–299 (WHLP…LIAV), 307–327 (MLAY…IAGD), 338–358 (YMLI…SFGL), 380–400 (LSLV…GFFG), 413–435 (LYFL…SRII), and 470–490 (MILC…IIAI).

It belongs to the complex I subunit 2 family. NDH is composed of at least 16 different subunits, 5 of which are encoded in the nucleus.

The protein resides in the plastid. The protein localises to the chloroplast thylakoid membrane. The enzyme catalyses a plastoquinone + NADH + (n+1) H(+)(in) = a plastoquinol + NAD(+) + n H(+)(out). It catalyses the reaction a plastoquinone + NADPH + (n+1) H(+)(in) = a plastoquinol + NADP(+) + n H(+)(out). In terms of biological role, NDH shuttles electrons from NAD(P)H:plastoquinone, via FMN and iron-sulfur (Fe-S) centers, to quinones in the photosynthetic chain and possibly in a chloroplast respiratory chain. The immediate electron acceptor for the enzyme in this species is believed to be plastoquinone. Couples the redox reaction to proton translocation, and thus conserves the redox energy in a proton gradient. The protein is NAD(P)H-quinone oxidoreductase subunit 2 A, chloroplastic of Psilotum nudum (Whisk fern).